The chain runs to 227 residues: uncharacterized protein (227 aa).

A signal peptide spans 1–23 (MKKLTVTFLTFISIFFAATAAFA).

This is an uncharacterized protein from Coxiella burnetii (strain RSA 493 / Nine Mile phase I).